The following is a 908-amino-acid chain: Mycobactin import ATP-binding/permease protein IrtA (908 aa).

Residues 1-329 (MARGFQGVML…SRLLAPLKKP (329 aa)) lie on the Cytoplasmic side of the membrane. The region spanning 15–124 (ARDHQATVVD…MGSRGFSVPE (110 aa)) is the FAD-binding FR-type domain. The segment at 16 to 245 (RDHQATVVDK…AQAYWTEGRA (230 aa)) is siderophore interaction domain. FAD is bound by residues 70 to 73 (RAYT), 87 to 91 (DMVLH), 97 to 98 (AS), and 241 to 243 (TEG). The interval 245-311 (AMGSSRGETS…GAAQPRTPVR (67 aa)) is disordered. A compositionally biased stretch (low complexity) spans 253-309 (TSTPAKPAAKTAPAKAAAKPAAASGAGTPEHAAAPAAATTGAPQAAPAPGAAQPRTP). A helical transmembrane segment spans residues 330-350 (LIVSGVLQALITLIELAPFVL). The ABC transmembrane type-1 domain occupies 331 to 613 (IVSGVLQALI…IGYGLSGIQT (283 aa)). Over 351–371 (LVELARLLLGGAEAERLWTLG) the chain is Periplasmic. The chain crosses the membrane as a helical span at residues 372-392 (LTAVSLIGLGAVLAAAMTLWL). Topologically, residues 393 to 444 (HRVDARFAHELRGRLLTKLSRLPLGWFTRRGSASTKQLVQDDTLALHYLITH) are cytoplasmic. Residues 445-465 (AIPDAVAAVVAPVAVLVYLFV) form a helical membrane-spanning segment. Over 466 to 469 (ADWR) the chain is Periplasmic. The chain crosses the membrane as a helical span at residues 470 to 490 (VALVLFIPVLVYLVLMSVMTI). Topologically, residues 491–557 (QSGSKIAQAP…PFVGKKTLMD (67 aa)) are cytoplasmic. The chain crosses the membrane as a helical span at residues 558-578 (LVTRPATFLWIILVAGVPLVV). At 579–586 (TGRMDPVN) the chain is on the periplasmic side. A helical transmembrane segment spans residues 587-607 (LLPFLLLGTTFGARLLGIGYG). Over 608–908 (LSGIQTGMLA…VSADAVEVGR (301 aa)) the chain is Cytoplasmic. In terms of domain architecture, ABC transporter spans 654 to 887 (VELDRVSFEY…GGRYRGLWDS (234 aa)). Residue 687 to 694 (GPSGSGKS) coordinates ATP.

It belongs to the ABC transporter superfamily. Siderophore-Fe(3+) uptake transporter (SIUT) (TC 3.A.1.21) family. In terms of assembly, forms a heterodimer with IrtB. FAD serves as cofactor.

The protein localises to the cell inner membrane. With respect to regulation, the ATPase activity of IrtAB is stimulated more than 38-fold in the presence of Fe-MBT, and more than 10-fold in the presence of Fe-cMBT. In terms of biological role, part of the ABC transporter complex IrtAB involved in the import of iron-bound mycobactin (Fe-MBT) and carboxymycobactin (Fe-cMBT). Has a preference for Fe-MBT over Fe-cMBT. Mycobactins are then reduced by the siderophore interaction domain to facilitate iron release in the bacterial cell. Transmembrane domains (TMD) form a pore in the membrane and the ATP-binding domain (NBD) is responsible for energy generation. This is Mycobactin import ATP-binding/permease protein IrtA from Mycolicibacterium thermoresistibile (strain ATCC 19527 / DSM 44167 / CIP 105390 / JCM 6362 / NCTC 10409 / 316) (Mycobacterium thermoresistibile).